The chain runs to 262 residues: Acyl-[acyl-carrier-protein]--UDP-N-acetylglucosamine O-acyltransferase (262 aa).

It belongs to the transferase hexapeptide repeat family. LpxA subfamily. In terms of assembly, homotrimer.

It localises to the cytoplasm. It carries out the reaction a (3R)-hydroxyacyl-[ACP] + UDP-N-acetyl-alpha-D-glucosamine = a UDP-3-O-[(3R)-3-hydroxyacyl]-N-acetyl-alpha-D-glucosamine + holo-[ACP]. The protein operates within glycolipid biosynthesis; lipid IV(A) biosynthesis; lipid IV(A) from (3R)-3-hydroxytetradecanoyl-[acyl-carrier-protein] and UDP-N-acetyl-alpha-D-glucosamine: step 1/6. Its function is as follows. Involved in the biosynthesis of lipid A, a phosphorylated glycolipid that anchors the lipopolysaccharide to the outer membrane of the cell. In Pectobacterium atrosepticum (strain SCRI 1043 / ATCC BAA-672) (Erwinia carotovora subsp. atroseptica), this protein is Acyl-[acyl-carrier-protein]--UDP-N-acetylglucosamine O-acyltransferase.